The following is a 215-amino-acid chain: Thiamine-phosphate synthase (215 aa).

4-amino-2-methyl-5-(diphosphooxymethyl)pyrimidine is bound by residues 43–47 (QFRDK) and asparagine 78. Mg(2+) is bound by residues aspartate 79 and aspartate 98. Serine 117 serves as a coordination point for 4-amino-2-methyl-5-(diphosphooxymethyl)pyrimidine. Residue 143–145 (TNS) coordinates 2-[(2R,5Z)-2-carboxy-4-methylthiazol-5(2H)-ylidene]ethyl phosphate. Lysine 146 serves as a coordination point for 4-amino-2-methyl-5-(diphosphooxymethyl)pyrimidine. Residues glycine 174 and 194–195 (IS) contribute to the 2-[(2R,5Z)-2-carboxy-4-methylthiazol-5(2H)-ylidene]ethyl phosphate site.

This sequence belongs to the thiamine-phosphate synthase family. It depends on Mg(2+) as a cofactor.

The catalysed reaction is 2-[(2R,5Z)-2-carboxy-4-methylthiazol-5(2H)-ylidene]ethyl phosphate + 4-amino-2-methyl-5-(diphosphooxymethyl)pyrimidine + 2 H(+) = thiamine phosphate + CO2 + diphosphate. It catalyses the reaction 2-(2-carboxy-4-methylthiazol-5-yl)ethyl phosphate + 4-amino-2-methyl-5-(diphosphooxymethyl)pyrimidine + 2 H(+) = thiamine phosphate + CO2 + diphosphate. It carries out the reaction 4-methyl-5-(2-phosphooxyethyl)-thiazole + 4-amino-2-methyl-5-(diphosphooxymethyl)pyrimidine + H(+) = thiamine phosphate + diphosphate. It participates in cofactor biosynthesis; thiamine diphosphate biosynthesis; thiamine phosphate from 4-amino-2-methyl-5-diphosphomethylpyrimidine and 4-methyl-5-(2-phosphoethyl)-thiazole: step 1/1. Its function is as follows. Condenses 4-methyl-5-(beta-hydroxyethyl)thiazole monophosphate (THZ-P) and 2-methyl-4-amino-5-hydroxymethyl pyrimidine pyrophosphate (HMP-PP) to form thiamine monophosphate (TMP). The chain is Thiamine-phosphate synthase from Lactococcus lactis subsp. lactis (strain IL1403) (Streptococcus lactis).